Reading from the N-terminus, the 92-residue chain is Cell division topological specificity factor (92 aa).

This sequence belongs to the MinE family.

Its function is as follows. Prevents the cell division inhibition by proteins MinC and MinD at internal division sites while permitting inhibition at polar sites. This ensures cell division at the proper site by restricting the formation of a division septum at the midpoint of the long axis of the cell. The sequence is that of Cell division topological specificity factor from Syntrophobacter fumaroxidans (strain DSM 10017 / MPOB).